The primary structure comprises 273 residues: Formamidopyrimidine-DNA glycosylase (273 aa).

Catalysis depends on Pro2, which acts as the Schiff-base intermediate with DNA. Glu3 acts as the Proton donor in catalysis. Lys60 acts as the Proton donor; for beta-elimination activity in catalysis. The DNA site is built by His94, Arg113, and Arg154. The FPG-type zinc finger occupies Asn239 to Arg273. Arg263 (proton donor; for delta-elimination activity) is an active-site residue.

It belongs to the FPG family. As to quaternary structure, monomer. The cofactor is Zn(2+).

It carries out the reaction Hydrolysis of DNA containing ring-opened 7-methylguanine residues, releasing 2,6-diamino-4-hydroxy-5-(N-methyl)formamidopyrimidine.. It catalyses the reaction 2'-deoxyribonucleotide-(2'-deoxyribose 5'-phosphate)-2'-deoxyribonucleotide-DNA = a 3'-end 2'-deoxyribonucleotide-(2,3-dehydro-2,3-deoxyribose 5'-phosphate)-DNA + a 5'-end 5'-phospho-2'-deoxyribonucleoside-DNA + H(+). Its function is as follows. Involved in base excision repair of DNA damaged by oxidation or by mutagenic agents. Acts as a DNA glycosylase that recognizes and removes damaged bases. Has a preference for oxidized purines, such as 7,8-dihydro-8-oxoguanine (8-oxoG). Has AP (apurinic/apyrimidinic) lyase activity and introduces nicks in the DNA strand. Cleaves the DNA backbone by beta-delta elimination to generate a single-strand break at the site of the removed base with both 3'- and 5'-phosphates. The chain is Formamidopyrimidine-DNA glycosylase from Roseiflexus sp. (strain RS-1).